A 149-amino-acid chain; its full sequence is Endothelin-1 (149 aa).

Positions 1 to 33 are excised as a propeptide; it reads AAETVVSGAELSLTANSGGEKTPPHAPGLLRRS. The interval 6 to 26 is disordered; it reads VSGAELSLTANSGGEKTPPHA. 2 disulfides stabilise this stretch: C36–C50 and C38–C46. Residues 57 to 149 constitute a propeptide that is removed on maturation; sequence VNTPGHIAPY…ISQQLGNGKK (93 aa). The segment at 93-107 is endothelin-like; sequence CQCANQKDKKCWNFC.

The protein belongs to the endothelin/sarafotoxin family.

It localises to the secreted. Endothelins are endothelium-derived vasoconstrictor peptides. Probable ligand for G-protein coupled receptors EDNRA and EDNRB which activates PTK2B, BCAR1, BCAR3 and, GTPases RAP1 and RHOA cascade in glomerular mesangial cells. Also binds the DEAR/FBXW7-AS1 receptor. Promotes mesenteric arterial wall remodeling via activation of ROCK signaling and subsequent colocalization of NFATC3 with F-actin filaments. NFATC3 then translocates to the nucleus where it subsequently promotes the transcription of the smooth muscle hypertrophy and differentiation marker ACTA2. The polypeptide is Endothelin-1 (EDN1) (Cavia porcellus (Guinea pig)).